Consider the following 190-residue polypeptide: DNA dC-&gt;dU-editing enzyme APOBEC-3C (190 aa).

One can recognise a CMP/dCMP-type deaminase domain in the interval aspartate 29–leucine 138. Zn(2+)-binding residues include histidine 66, cysteine 97, and cysteine 100.

Belongs to the cytidine and deoxycytidylate deaminase family. Homodimer. Interacts with TRIB3. The cofactor is Zn(2+).

Its subcellular location is the nucleus. The protein localises to the cytoplasm. The enzyme catalyses a 2'-deoxycytidine in single-stranded DNA + H2O + H(+) = a 2'-deoxyuridine in single-stranded DNA + NH4(+). Its function is as follows. DNA deaminase (cytidine deaminase) which acts as an inhibitor of retrovirus replication and retrotransposon mobility via deaminase-dependent and -independent mechanisms. May also play a role in the epigenetic regulation of gene expression through the process of active DNA demethylation. This Gorilla gorilla gorilla (Western lowland gorilla) protein is DNA dC-&gt;dU-editing enzyme APOBEC-3C (APOBEC3C).